A 153-amino-acid polypeptide reads, in one-letter code: Putative phosphatidylglycerol/phosphatidylinositol transfer protein DDB_G0285639 (153 aa).

Positions 1–21 (MIIKILLLIISISLFLNISIG) are cleaved as a signal peptide. 5 N-linked (GlcNAc...) asparagine glycosylation sites follow: N17, N61, N87, N117, and N140.

It belongs to the NPC2 family. In terms of assembly, monomer.

Functionally, catalyzes the intermembrane transfer of phosphatidylglycerol and phosphatidylinositol. The polypeptide is Putative phosphatidylglycerol/phosphatidylinositol transfer protein DDB_G0285639 (Dictyostelium discoideum (Social amoeba)).